A 1204-amino-acid polypeptide reads, in one-letter code: ATP-dependent helicase/nuclease subunit A (1204 aa).

In terms of domain architecture, UvrD-like helicase ATP-binding spans 2-472; sequence PQFTKEQEKA…ILLSDNFRST (471 aa). 23-30 lines the ATP pocket; the sequence is ASAGSGKT. The UvrD-like helicase C-terminal domain maps to 500 to 783; it reads GQLIFGAKYY…RLMTIHGSKG (284 aa).

The protein belongs to the helicase family. AddA subfamily. As to quaternary structure, heterodimer of AddA and AddB/RexB. The cofactor is Mg(2+).

The enzyme catalyses Couples ATP hydrolysis with the unwinding of duplex DNA by translocating in the 3'-5' direction.. It catalyses the reaction ATP + H2O = ADP + phosphate + H(+). Its function is as follows. The heterodimer acts as both an ATP-dependent DNA helicase and an ATP-dependent, dual-direction single-stranded exonuclease. Recognizes the chi site generating a DNA molecule suitable for the initiation of homologous recombination. The AddA nuclease domain is required for chi fragment generation; this subunit has the helicase and 3' -&gt; 5' nuclease activities. The polypeptide is ATP-dependent helicase/nuclease subunit A (Lactobacillus helveticus (strain DPC 4571)).